The primary structure comprises 195 residues: ATP-dependent Clp protease proteolytic subunit (195 aa).

Ser97 serves as the catalytic Nucleophile. Residue His122 is part of the active site.

It belongs to the peptidase S14 family. In terms of assembly, fourteen ClpP subunits assemble into 2 heptameric rings which stack back to back to give a disk-like structure with a central cavity, resembling the structure of eukaryotic proteasomes.

The protein localises to the cytoplasm. It catalyses the reaction Hydrolysis of proteins to small peptides in the presence of ATP and magnesium. alpha-casein is the usual test substrate. In the absence of ATP, only oligopeptides shorter than five residues are hydrolyzed (such as succinyl-Leu-Tyr-|-NHMec, and Leu-Tyr-Leu-|-Tyr-Trp, in which cleavage of the -Tyr-|-Leu- and -Tyr-|-Trp bonds also occurs).. Cleaves peptides in various proteins in a process that requires ATP hydrolysis. Has a chymotrypsin-like activity. Plays a major role in the degradation of misfolded proteins. This is ATP-dependent Clp protease proteolytic subunit from Lactobacillus acidophilus (strain ATCC 700396 / NCK56 / N2 / NCFM).